The following is a 335-amino-acid chain: DNA-directed RNA polymerase subunit alpha (335 aa).

Positions 1–233 (MVREKITVST…DLFIPFLHME (233 aa)) are alpha N-terminal domain (alpha-NTD). The interval 265–335 (KEIALKSIFI…KQLVIFLPKK (71 aa)) is alpha C-terminal domain (alpha-CTD).

This sequence belongs to the RNA polymerase alpha chain family. In terms of assembly, in plastids the minimal PEP RNA polymerase catalytic core is composed of four subunits: alpha, beta, beta', and beta''. When a (nuclear-encoded) sigma factor is associated with the core the holoenzyme is formed, which can initiate transcription.

The protein localises to the plastid. Its subcellular location is the chloroplast. It carries out the reaction RNA(n) + a ribonucleoside 5'-triphosphate = RNA(n+1) + diphosphate. Its function is as follows. DNA-dependent RNA polymerase catalyzes the transcription of DNA into RNA using the four ribonucleoside triphosphates as substrates. The protein is DNA-directed RNA polymerase subunit alpha of Coffea arabica (Arabian coffee).